The primary structure comprises 525 residues: NGFI-A-binding protein 2 (525 aa).

The disordered stretch occupies residues 1–31; sequence MHRAPSPTAEQPPGRGDNTRRTPQPRFKASA. At Ser-6 the chain carries Phosphoserine. The segment at 35 to 113 is NCD1; that stretch reads ALPRTLGELQ…REWATNPGLF (79 aa). Residues 135-238 are disordered; the sequence is GTRKGSMSNG…GAGGGPDRLE (104 aa). Phosphoserine occurs at positions 157, 159, 162, and 171. The segment covering 212 to 234 has biased composition (gly residues); it reads AGGGVSEGPGVGGVAAGGAGGGP. The tract at residues 267–356 is NCD2; that stretch reads LLKLNKKLAR…SRQVARESTY (90 aa). The interval 353 to 384 is necessary for nuclear localization; sequence ESTYLSSLKGSRLHSEELGGPPLKKLKQEVGE. Lys-379 participates in a covalent cross-link: Glycyl lysine isopeptide (Lys-Gly) (interchain with G-Cter in SUMO1). Positions 381–416 are disordered; sequence EVGEQSHNEIQQPPPGPESYAPPYRPSLEEDSASLS. Ser-479 carries the phosphoserine modification. A disordered region spans residues 501–525; the sequence is APGPHPALVEGRRSSVKVEAEASRQ. Residues 510–525 show a composition bias toward basic and acidic residues; the sequence is EGRRSSVKVEAEASRQ. A Glycyl lysine isopeptide (Lys-Gly) (interchain with G-Cter in SUMO1); alternate cross-link involves residue Lys-517. Residue Lys-517 forms a Glycyl lysine isopeptide (Lys-Gly) (interchain with G-Cter in SUMO2); alternate linkage.

Belongs to the NAB family. Homomultimers may associate with EGR1 bound to DNA. Post-translationally, sumoylation by EGR2 represses EGR2 transcriptional activity in hindbrain. In terms of tissue distribution, highly expressed in brain and thymus, and at lower levels in spleen, kidney, heart and testis. Isoform 1 is predominantly expressed in testis, whereas isoform 3 is more abundant in thymus.

It localises to the nucleus. Its function is as follows. Acts as a transcriptional repressor for zinc finger transcription factors EGR1 and EGR2. Isoform 2 lacks repression ability. This Mus musculus (Mouse) protein is NGFI-A-binding protein 2 (Nab2).